The sequence spans 319 residues: tRNA uridine(34) hydroxylase (319 aa).

The region spanning 124 to 218 is the Rhodanese domain; it reads LDEDTVILDA…YGKNEETKGE (95 aa). Cysteine 178 serves as the catalytic Cysteine persulfide intermediate.

It belongs to the TrhO family.

The enzyme catalyses uridine(34) in tRNA + AH2 + O2 = 5-hydroxyuridine(34) in tRNA + A + H2O. Catalyzes oxygen-dependent 5-hydroxyuridine (ho5U) modification at position 34 in tRNAs. The protein is tRNA uridine(34) hydroxylase of Listeria monocytogenes serotype 4b (strain CLIP80459).